A 2003-amino-acid polypeptide reads, in one-letter code: Neurogenic locus notch homolog protein 4 (2003 aa).

An N-terminal signal peptide occupies residues 1-23; it reads MQPPSLLLLLLLLLLLCVSVVRP. EGF-like domains follow at residues 24-63, 64-115, 118-155, and 156-192; these read RGLLCGSFPEPCANGGTCLSLSLGQGTCQCAPGFLGETCQ, FPDP…ERCQ, LEDPCPPSFCSKRGRCHIQASGRPQCSCMPGWTGEQCQ, and LRDFCSANPCVNGGVCLATYPQIQCHCPPGFEGHACE. Residues 24–1447 lie on the Extracellular side of the membrane; sequence RGLLCGSFPE…TAPPANQLPW (1424 aa). 48 disulfide bridges follow: Cys28–Cys41, Cys35–Cys51, Cys53–Cys62, Cys68–Cys80, Cys74–Cys103, Cys105–Cys114, Cys122–Cys133, Cys127–Cys143, Cys145–Cys154, Cys160–Cys171, Cys165–Cys180, Cys182–Cys191, Cys198–Cys211, Cys205–Cys220, Cys222–Cys231, Cys238–Cys249, Cys243–Cys262, Cys264–Cys273, Cys280–Cys291, Cys285–Cys300, Cys302–Cys311, Cys318–Cys332, Cys326–Cys341, Cys343–Cys352, Cys359–Cys370, Cys364–Cys379, Cys381–Cys390, Cys396–Cys407, Cys401–Cys418, Cys420–Cys429, Cys436–Cys452, Cys446–Cys461, Cys463–Cys472, Cys479–Cys490, Cys484–Cys499, Cys501–Cys510, Cys517–Cys528, Cys522–Cys537, Cys539–Cys548, Cys555–Cys566, Cys560–Cys575, Cys577–Cys586, Cys593–Cys604, Cys598–Cys613, Cys615–Cys624, Cys629–Cys640, Cys634–Cys649, and Cys651–Cys658. The region spanning 194–232 is the EGF-like 5; calcium-binding domain; that stretch reads DVNECFQDPGPCPKGTSCHNTLGSFQCLCPVGQEGPRCE. In terms of domain architecture, EGF-like 6 spans 234–274; it reads RAGPCPPRGCSNGGTCQLMPEKDSTFHLCLCPPGFIGPDCE. An EGF-like 7; calcium-binding domain is found at 276–312; it reads NPDNCVSHQCQNGGTCQDGLDTYTCLCPETWTGWDCS. Residues 314 to 353 enclose the EGF-like 8; calcium-binding domain; that stretch reads DVDECETQGPPHCRNGGTCQNSAGSFHCVCVSGWGGTSCE. One can recognise an EGF-like 9; calcium-binding domain in the interval 355 to 391; it reads NLDDCIAATCAPGSTCIDRVGSFSCLCPPGRTGLLCH. The EGF-like 10 domain maps to 392–430; the sequence is LEDMCLSQPCHGDAQCSTNPLTGSTLCLCQPGYSGPTCH. The region spanning 432–473 is the EGF-like 11; calcium-binding domain; that stretch reads DLDECLMAQQGPSPCEHGGSCLNTPGSFNCLCPPGYTGSRCE. Positions 475-511 constitute an EGF-like 12; calcium-binding domain; sequence DHNECLSQPCHPGSTCLDLLATFHCLCPPGLEGQLCE. The EGF-like 13; calcium-binding domain maps to 513 to 549; it reads ETNECASAPCLNHADCHDLLNGFQCICLPGFSGTRCE. An EGF-like 14; calcium-binding domain is found at 551–587; sequence DIDECRSSPCANGGQCQDQPGAFHCKCLPGFEGPRCQ. Positions 589 to 625 constitute an EGF-like 15; calcium-binding domain; it reads EVDECLSDPCPVGASCLDLPGAFFCLCPSGFTGQLCE. 14 consecutive EGF-like domains span residues 626 to 659, 661 to 689, 691 to 727, 729 to 765, 767 to 803, 806 to 842, 844 to 880, 882 to 928, 930 to 966, 968 to 1004, 1006 to 1044, 1046 to 1085, 1087 to 1126, and 1130 to 1171; these read VPLCAPNLCQPKQICKDQKDKANCLCPDGSPGCA, PEDNCTCHHGHCQRSSCVCDVGWTGPECE, ELGGCISAPCAHGGTCYPQPSGYNCTCPTGYTGPTCS, EMTACHSGPCLNGGSCNPSPGGYYCTCPPSHTGPQCQ, STDYCVSAPCFNGGTCVNRPGTFSCLCAMGFQGPRCE, LRPSCADSPCRNRATCQDSPQGPRCLCPTGYTGGSCQ, LMDLCAQKPCPRNSHCLQTGPSFHCLCLQGWTGPLCN, PLSS…SLCQ, HVNPCESRPCQNGATCMAQPSGYLCQCAPGYDGQNCS, ELDACQSQPCHNHGTCTPKPGGFHCACPPGFVGLRCE, DVDECLDQPCHPTGTAACHSLANAFYCQCLPGHTGQWCE, EIDPCHSQPCFHGGTCEATAGSPLGFICHCPKGFEGPTCS, RAPSCGFHHCHHGGLCLPSPKPGFPPRCACLSGYGGPDCL, and APKG…PRCQ. N-linked (GlcNAc...) asparagine glycosylation is present at Asn664. Disulfide bonds link Cys665–Cys672, Cys667–Cys677, Cys679–Cys688, Cys695–Cys706, Cys700–Cys715, Cys717–Cys726, Cys733–Cys744, Cys738–Cys753, Cys755–Cys764, Cys771–Cys782, Cys776–Cys791, Cys793–Cys802, Cys810–Cys821, Cys815–Cys830, Cys832–Cys841, Cys848–Cys859, Cys853–Cys868, Cys870–Cys879, Cys886–Cys907, Cys901–Cys916, Cys918–Cys927, Cys934–Cys945, Cys939–Cys954, Cys956–Cys965, Cys972–Cys983, Cys977–Cys992, Cys994–Cys1003, Cys1010–Cys1023, Cys1015–Cys1032, Cys1034–Cys1043, Cys1050–Cys1061, Cys1055–Cys1073, Cys1075–Cys1084, Cys1091–Cys1102, Cys1096–Cys1114, Cys1116–Cys1125, Cys1134–Cys1146, Cys1140–Cys1159, Cys1161–Cys1170, Cys1178–Cys1191, Cys1187–Cys1203, Cys1214–Cys1238, Cys1220–Cys1233, Cys1229–Cys1245, Cys1251–Cys1277, Cys1259–Cys1272, and Cys1268–Cys1284. A glycan (N-linked (GlcNAc...) asparagine) is linked at Asn714. The N-linked (GlcNAc...) asparagine glycan is linked to Asn964. The N-linked (GlcNAc...) asparagine glycan is linked to Asn1143. LNR repeat units follow at residues 1170 to 1213, 1214 to 1250, and 1251 to 1294; these read CQKP…PWKG, CPSHSRCWLLFRDGQCHPQCDSEECLFDGYDCETPPA, and CTPA…PEWG. A disordered region spans residues 1347 to 1371; the sequence is AEEKLGGTRDPTYQERAAPQTQPLG. The helical transmembrane segment at 1448–1468 threads the bilayer; sequence PVLCSPVAGVILLALGALLVL. Over 1469-2003 the chain is Cytoplasmic; that stretch reads QLIRRRRREH…PINQGGEGKK (535 aa). The segment at 1485 to 1508 is disordered; that stretch reads PGFTRRPRTQSAPHRRRPPLGEDS. Positions 1489–1502 are enriched in basic residues; that stretch reads RRPRTQSAPHRRRP. 5 ANK repeats span residues 1633-1665, 1666-1698, 1700-1732, 1733-1765, and 1766-1798; these read TGETPLHLAARFSRPTAARRLLEAGANPNQPDR, AGRTPLHAAVAADAREVCQLLLRSRQTAVDART, DGTTPLMLAARLAVEDLVEELIAAQADVGARDK, WGKTALHWAAAVNNARAARSLLQAGADKDAQDN, and REQTPLFLAAREGAVEVAQLLLGLGAARELRDQ. Disordered stretches follow at residues 1900–1927 and 1968–2003; these read LSGVGAGGGPTPRGRRFSAGMRGPRPNP and PPPCLTPSPERGSPQLDCGPPALQEMPINQGGEGKK.

This sequence belongs to the NOTCH family. As to quaternary structure, heterodimer of a C-terminal fragment N(TM) and a N-terminal fragment N(EC) which are probably linked by disulfide bonds. Interacts with MAML1, MAML2 and MAML3 which act as transcriptional coactivators for NOTCH4. (Microbial infection) Interacts with Epstein-Barr virus (EBV) RK-BARF0. In terms of processing, synthesized in the endoplasmic reticulum as an inactive form which is proteolytically cleaved by a furin-like convertase in the trans-Golgi network before it reaches the plasma membrane to yield an active, ligand-accessible form. Cleavage results in a C-terminal fragment N(TM) and a N-terminal fragment N(EC). Following ligand binding, it is cleaved by TNF-alpha converting enzyme (TACE) to yield a membrane-associated intermediate fragment called notch extracellular truncation (NEXT). This fragment is then cleaved by presenilin dependent gamma-secretase to release a notch-derived peptide containing the intracellular domain (NICD) from the membrane. Phosphorylated. In terms of tissue distribution, highly expressed in the heart, moderately in the lung and placenta and at low levels in the liver, skeletal muscle, kidney, pancreas, spleen, lymph node, thymus, bone marrow and fetal liver. No expression was seen in adult brain or peripheral blood leukocytes.

The protein localises to the cell membrane. It is found in the nucleus. Functions as a receptor for membrane-bound ligands Jagged1, Jagged2 and Delta1 to regulate cell-fate determination. Upon ligand activation through the released notch intracellular domain (NICD) it forms a transcriptional activator complex with RBPJ/RBPSUH and activates genes of the enhancer of split locus. Affects the implementation of differentiation, proliferation and apoptotic programs. May regulate branching morphogenesis in the developing vascular system. This is Neurogenic locus notch homolog protein 4 from Homo sapiens (Human).